Consider the following 465-residue polypeptide: ATP synthase subunit beta (465 aa).

155–162 (GGAGVGKT) is an ATP binding site.

Belongs to the ATPase alpha/beta chains family. F-type ATPases have 2 components, CF(1) - the catalytic core - and CF(0) - the membrane proton channel. CF(1) has five subunits: alpha(3), beta(3), gamma(1), delta(1), epsilon(1). CF(0) has three main subunits: a(1), b(2) and c(9-12). The alpha and beta chains form an alternating ring which encloses part of the gamma chain. CF(1) is attached to CF(0) by a central stalk formed by the gamma and epsilon chains, while a peripheral stalk is formed by the delta and b chains.

The protein resides in the cell membrane. It carries out the reaction ATP + H2O + 4 H(+)(in) = ADP + phosphate + 5 H(+)(out). Produces ATP from ADP in the presence of a proton gradient across the membrane. The catalytic sites are hosted primarily by the beta subunits. The protein is ATP synthase subunit beta of Buchnera aphidicola subsp. Baizongia pistaciae (strain Bp).